A 241-amino-acid chain; its full sequence is Superantigen-like protein 13 (241 aa).

Residues 1–26 (MNNNITKKIILSTTLLLLGTASTQFP) form the signal peptide.

It belongs to the staphylococcal/streptococcal toxin family. As to quaternary structure, interacts with host FPR2; this interaction promotes neutrophil chemotaxis.

Acts as a pathogen alarming molecule by acting on host neutrophil chemotactic factors FPR2. Plays a role of chemoattractant and induces degranulation and oxidative burst in neutrophils. This chain is Superantigen-like protein 13, found in Staphylococcus aureus (strain Newman).